Here is a 270-residue protein sequence, read N- to C-terminus: tRNA pseudouridine synthase A (270 aa).

Asp-54 acts as the Nucleophile in catalysis. Tyr-112 contacts substrate.

This sequence belongs to the tRNA pseudouridine synthase TruA family. In terms of assembly, homodimer.

It carries out the reaction uridine(38/39/40) in tRNA = pseudouridine(38/39/40) in tRNA. In terms of biological role, formation of pseudouridine at positions 38, 39 and 40 in the anticodon stem and loop of transfer RNAs. The polypeptide is tRNA pseudouridine synthase A (Bordetella bronchiseptica (strain ATCC BAA-588 / NCTC 13252 / RB50) (Alcaligenes bronchisepticus)).